A 158-amino-acid polypeptide reads, in one-letter code: Small ribosomal subunit protein uS15 (158 aa).

Over residues 1 to 18 (MARMHARKRGKSGSKRPP) the composition is skewed to basic residues. The disordered stretch occupies residues 1 to 21 (MARMHARKRGKSGSKRPPRTA).

The protein belongs to the universal ribosomal protein uS15 family. In terms of assembly, part of the 30S ribosomal subunit.

The polypeptide is Small ribosomal subunit protein uS15 (Pyrococcus horikoshii (strain ATCC 700860 / DSM 12428 / JCM 9974 / NBRC 100139 / OT-3)).